We begin with the raw amino-acid sequence, 776 residues long: Protein SEY1 (776 aa).

Residues 1–681 (MADRSAIQLI…KRSIITTRTH (681 aa)) are Cytoplasmic-facing. The region spanning 34-263 (GLDYHVISVF…TENYYFKPQY (230 aa)) is the GB1/RHD3-type G domain. A GTP-binding site is contributed by 44 to 51 (GSQSSGKS). The helical transmembrane segment at 682–702 (IPPWIYVLLAVLGWNEFVAVI) threads the bilayer. Topologically, residues 703-705 (RNP) are lumenal. A helical membrane pass occupies residues 706 to 726 (LFVTLTLILGATFFVIHKFGL). At 727 to 776 (WGPVVNVVQSAVGETRTAIKDKLRQFVVEDHEVKESFEMKDFSKNEQKEK) the chain is on the cytoplasmic side.

It belongs to the TRAFAC class dynamin-like GTPase superfamily. GB1/RHD3 GTPase family. RHD3 subfamily. As to quaternary structure, interacts with RTN1 and YOP1; GTP binding is not required for these interactions.

The protein localises to the endoplasmic reticulum membrane. Functionally, cooperates with the reticulon proteins RTN1 and RTN2 and the tubule-shaping DP1 family protein YOP1 to generate and maintain the structure of the tubular endoplasmic reticulum network. Has GTPase activity, which is required for its function in ER organization. This is Protein SEY1 from Saccharomyces cerevisiae (strain AWRI1631) (Baker's yeast).